Consider the following 214-residue polypeptide: Thioredoxin-like 4, chloroplastic (214 aa).

Over residues 1–20 (MITASLLPLPATSSSSGRRS) the composition is skewed to low complexity. Residues 1-68 (MITASLLPLP…STNGSLPGLP (68 aa)) are disordered. The transit peptide at 1–71 (MITASLLPLP…GSLPGLPPVV (71 aa)) directs the protein to the chloroplast. A compositionally biased stretch (pro residues) spans 21-34 (LPPPTTTFPRPPPP). The span at 42 to 53 (SSSSSSASSTES) shows a compositional bias: low complexity. The Thioredoxin domain occupies 72-199 (VEEEEEEFCP…IIAAIQKYTA (128 aa)). Catalysis depends on nucleophile residues C117 and C120. An intrachain disulfide couples C117 to C120.

The protein belongs to the thioredoxin family.

The protein resides in the plastid. It localises to the chloroplast. In terms of biological role, probable thiol-disulfide oxidoreductase that may participate in various redox reactions. The chain is Thioredoxin-like 4, chloroplastic from Oryza sativa subsp. japonica (Rice).